A 1020-amino-acid polypeptide reads, in one-letter code: Protein translocase subunit SecA (1020 aa).

ATP contacts are provided by residues Q143, 161-165 (GEGKT), and D661. Positions 974–1020 (SVYNASPGAENEAPLQRPVTADSKPGRNDPCPCGSGKKYKNCHGQQP) are disordered. Zn(2+)-binding residues include C1004, C1006, C1015, and H1016.

It belongs to the SecA family. In terms of assembly, monomer and homodimer. Part of the essential Sec protein translocation apparatus which comprises SecA, SecYEG and auxiliary proteins SecDF. Other proteins may also be involved. It depends on Zn(2+) as a cofactor.

Its subcellular location is the cell inner membrane. The protein resides in the cytoplasm. The enzyme catalyses ATP + H2O + cellular proteinSide 1 = ADP + phosphate + cellular proteinSide 2.. In terms of biological role, part of the Sec protein translocase complex. Interacts with the SecYEG preprotein conducting channel. Has a central role in coupling the hydrolysis of ATP to the transfer of proteins into and across the cell membrane, serving as an ATP-driven molecular motor driving the stepwise translocation of polypeptide chains across the membrane. This chain is Protein translocase subunit SecA, found in Chlorobium phaeovibrioides (strain DSM 265 / 1930) (Prosthecochloris vibrioformis (strain DSM 265)).